A 244-amino-acid polypeptide reads, in one-letter code: High frequency lysogenization protein HflD homolog (244 aa).

Belongs to the HflD family.

It is found in the cytoplasm. Its subcellular location is the cell inner membrane. The chain is High frequency lysogenization protein HflD homolog from Acinetobacter baumannii (strain SDF).